The sequence spans 280 residues: Phosphatidylserine decarboxylase proenzyme (280 aa).

Active-site charge relay system; for autoendoproteolytic cleavage activity residues include Asp90, His146, and Ser247. The Schiff-base intermediate with substrate; via pyruvic acid; for decarboxylase activity role is filled by Ser247. At Ser247 the chain carries Pyruvic acid (Ser); by autocatalysis.

Belongs to the phosphatidylserine decarboxylase family. PSD-B subfamily. Prokaryotic type I sub-subfamily. As to quaternary structure, heterodimer of a large membrane-associated beta subunit and a small pyruvoyl-containing alpha subunit. It depends on pyruvate as a cofactor. Is synthesized initially as an inactive proenzyme. Formation of the active enzyme involves a self-maturation process in which the active site pyruvoyl group is generated from an internal serine residue via an autocatalytic post-translational modification. Two non-identical subunits are generated from the proenzyme in this reaction, and the pyruvate is formed at the N-terminus of the alpha chain, which is derived from the carboxyl end of the proenzyme. The autoendoproteolytic cleavage occurs by a canonical serine protease mechanism, in which the side chain hydroxyl group of the serine supplies its oxygen atom to form the C-terminus of the beta chain, while the remainder of the serine residue undergoes an oxidative deamination to produce ammonia and the pyruvoyl prosthetic group on the alpha chain. During this reaction, the Ser that is part of the protease active site of the proenzyme becomes the pyruvoyl prosthetic group, which constitutes an essential element of the active site of the mature decarboxylase.

The protein resides in the cell membrane. It carries out the reaction a 1,2-diacyl-sn-glycero-3-phospho-L-serine + H(+) = a 1,2-diacyl-sn-glycero-3-phosphoethanolamine + CO2. The protein operates within phospholipid metabolism; phosphatidylethanolamine biosynthesis; phosphatidylethanolamine from CDP-diacylglycerol: step 2/2. In terms of biological role, catalyzes the formation of phosphatidylethanolamine (PtdEtn) from phosphatidylserine (PtdSer). The sequence is that of Phosphatidylserine decarboxylase proenzyme from Myxococcus xanthus (strain DK1622).